We begin with the raw amino-acid sequence, 237 residues long: Ribosomal RNA large subunit methyltransferase E (237 aa).

Residues glycine 76, tryptophan 78, aspartate 99, aspartate 115, and aspartate 139 each contribute to the S-adenosyl-L-methionine site. Residue lysine 179 is the Proton acceptor of the active site.

This sequence belongs to the class I-like SAM-binding methyltransferase superfamily. RNA methyltransferase RlmE family.

The protein localises to the cytoplasm. The enzyme catalyses uridine(2552) in 23S rRNA + S-adenosyl-L-methionine = 2'-O-methyluridine(2552) in 23S rRNA + S-adenosyl-L-homocysteine + H(+). Specifically methylates the uridine in position 2552 of 23S rRNA at the 2'-O position of the ribose in the fully assembled 50S ribosomal subunit. In Rhodopseudomonas palustris (strain ATCC BAA-98 / CGA009), this protein is Ribosomal RNA large subunit methyltransferase E.